A 257-amino-acid chain; its full sequence is Na(+)-translocating NADH-quinone reductase subunit C (257 aa).

Residues 13–33 (LTVVVLLSLICSLIVASAAVL) form a helical membrane-spanning segment. The residue at position 224 (Thr224) is an FMN phosphoryl threonine.

Belongs to the NqrC family. In terms of assembly, composed of six subunits; NqrA, NqrB, NqrC, NqrD, NqrE and NqrF. FMN serves as cofactor.

The protein resides in the cell inner membrane. It catalyses the reaction a ubiquinone + n Na(+)(in) + NADH + H(+) = a ubiquinol + n Na(+)(out) + NAD(+). Its function is as follows. NQR complex catalyzes the reduction of ubiquinone-1 to ubiquinol by two successive reactions, coupled with the transport of Na(+) ions from the cytoplasm to the periplasm. NqrA to NqrE are probably involved in the second step, the conversion of ubisemiquinone to ubiquinol. The protein is Na(+)-translocating NADH-quinone reductase subunit C of Haemophilus ducreyi (strain 35000HP / ATCC 700724).